Reading from the N-terminus, the 570-residue chain is Putative diflavin flavoprotein A 5 (570 aa).

Positions 38-231 (ERGTTSNSYV…LQVRLYAVGH (194 aa)) are zinc metallo-hydrolase. The 143-residue stretch at 260–402 (VALLYASAYG…VGTDFAQTLK (143 aa)) folds into the Flavodoxin-like domain. The tract at residues 421-570 (VGRIVGSVCV…INHRKTGNHY (150 aa)) is flavodoxin-reductase-like.

It in the N-terminal section; belongs to the zinc metallo-hydrolase group 3 family. The protein in the C-terminal section; belongs to the flavodoxin reductase family. Requires Fe cation as cofactor.

Mediates electron transfer from NADH to oxygen, reducing it to water. This modular protein has 3 redox cofactors, in other organisms the same activity requires 2 or 3 proteins. The polypeptide is Putative diflavin flavoprotein A 5 (dfa5) (Nostoc sp. (strain PCC 7120 / SAG 25.82 / UTEX 2576)).